A 942-amino-acid chain; its full sequence is Homeobox protein 2 (942 aa).

2 stretches are compositionally biased toward low complexity: residues 32–87 (ECNE…NINE) and 98–130 (SPYS…SPIP). 4 disordered regions span residues 32 to 149 (ECNE…PQNI), 161 to 494 (LESP…RLKK), 537 to 580 (RQEK…QGGA), and 609 to 942 (FKNN…CQQN). Polar residues predominate over residues 131–149 (NTNFKQSGEYQSIPSPQNI). A compositionally biased stretch (low complexity) spans 163–261 (SPNSSNSSPS…PSSNLSKSNS (99 aa)). The segment covering 269–290 (QAPSNTSSPQLLSPNHNQQRIS) has biased composition (polar residues). 2 stretches are compositionally biased toward low complexity: residues 299–430 (NNNH…NSSP) and 450–464 (NNNN…SNSS). Residues 465 to 481 (FDEYQPQQKVSRSNSPN) are compositionally biased toward polar residues. Positions 485–544 (EKKRRTRLKKEQADILKTFFDNDDYPTKDDKETLANRLGMSYCAVTTWFSNKRQEKKRRG) form a DNA-binding region, homeobox. 6 stretches are compositionally biased toward low complexity: residues 609–621 (FKNN…NKNV), 628–685 (NNNN…GSSD), 694–737 (NNNN…NNNN), 752–764 (NNNN…NNNN), 776–864 (SDDT…YLNN), and 890–927 (NNFN…NDNN). The stretch at 835–865 (NNNNNNNNQNNNNNNNNNQYNNNNKNYLNNI) forms a coiled coil.

The protein localises to the nucleus. Its function is as follows. Putative transcription factor that may potentiate the function of warA. The polypeptide is Homeobox protein 2 (hbx2) (Dictyostelium discoideum (Social amoeba)).